The chain runs to 419 residues: E3 ubiquitin-protein ligase RNF130 (419 aa).

The N-terminal stretch at 1–27 (MSGAARAGPARLAALALLTCSLWPTRA) is a signal peptide. At 28 to 194 (DNASQEYYTA…MPPKNFSRGS (167 aa)) the chain is on the extracellular side. 6 N-linked (GlcNAc...) asparagine glycosylation sites follow: Asn-29, Asn-40, Asn-112, Asn-135, Asn-172, and Asn-189. Positions 105 to 176 (IALLQRGNCT…SYLEKNISVQ (72 aa)) constitute a PA domain. Residues 195 to 217 (LVFVSISFIVLMIISSAWLIFYF) traverse the membrane as a helical segment. Topologically, residues 218-419 (IQKIRYTNAR…SLNANEVEWF (202 aa)) are cytoplasmic. The segment at 264–305 (CAVCIESYKQNDVVRVLPCKHVFHKSCVDPWLSEHCTCPMCK) adopts an RING-type zinc-finger fold. Ser-341 bears the Phosphoserine mark.

As to expression, in testis sections, expressed in interstitial tissue and seminiferous tubules. In tubules, expression is mainly in postmeiotic germ cells and to a much lesser extent in Sertoli cells (at protein level). Expressed at high levels in liver, lung, stomach, heart and thymus.

It localises to the membrane. The protein localises to the cytoplasm. It carries out the reaction S-ubiquitinyl-[E2 ubiquitin-conjugating enzyme]-L-cysteine + [acceptor protein]-L-lysine = [E2 ubiquitin-conjugating enzyme]-L-cysteine + N(6)-ubiquitinyl-[acceptor protein]-L-lysine.. It participates in protein modification; protein ubiquitination. Its function is as follows. Acts as an E3 ubiquitin-protein ligase. May have a role during the programmed cell death of hematopoietic cells. The polypeptide is E3 ubiquitin-protein ligase RNF130 (Rattus norvegicus (Rat)).